A 1534-amino-acid polypeptide reads, in one-letter code: MAERANLVFHNKEIDGTAIKRLISRLIDHFGMGYTSHILDQIKTLGFHQATTTSISLGIEDLLTIPSKGWLVQDAEQQSFLLEKHYYYGAVHAVEKLRQSVEIWYATSEYLKQEMNSNFRITDPSNPVYLMSFSGARGNASQVHQLVGMRGLMADPQGQMIDLPIQSNLREGLSLTEYIISCYGARKGVVDTAVRTADAGYLTRRLVEVVQHIIVRRRDCGTIQGISVSPQNGMTEKLFVQTLIGRVLADDIYIGSRCIASRNQDIGIGLVNRFITAFRAQPFRAQPIYIRTPFTCRSTSWICQLCYGRSPTHGDLVELGEAVGIIAGQSIGEPGTQLTLRTFHTGGVFTGGTADLIRSPSNGKIQFNEDLVHPTRTRHGQPAFLCYIDLHVTIQSQDILHSVNIPLKSLILVQNDQYVESEQVIAEIRAGMSTLHFKEKVQKHIYSESDGEMHWSTDVYHAPEYQYGNLRRLPKTSHLWILSVSMCRSSIASFSLHKDQDQMNTYSFSVDGRYIFDFSMANDQVSHRLLDTFGKKDREILDYLTPDRIVSNGHWNCFYPSILQDNSDLLAKKRRNRFVVPLQYHQEQEKERISCLGISMEIPFMGVLRRNTIFAYFDDPRYRKDKRGSGIVKFRYRTLEEEYRTQEEEYRTREEEYRTREEEYRTREEDSEDEYESPENKYRTREGEGEYEILEDEYRTLEDEYETLEDEYGILEDEYRTLEKDSEEEYGSLENKYRTREGEGEYEILEEDSEEEYGSSEDGSEKEYGTLEEDSEEDSEEDSEDEYGSPEENSILKKEGFIEHRGTKEFSLKYQKEVDRFFFILQELHILPRSSSLKVLDNSIIGVDTQLTKNTRSRLGGLVRVKRKKSHTELKIFSGDIHFPEEADKILGGSLIPPEREKKDSKESKKRKNWVYVQRKKILKSKEKYFVLVRPAVAYEMDEGRNLATLFPQDLLQEEDNLQLRLVNFISHENSKLTQRIYHTNSQFVRTCLVVNWEQEEKEGARASLVEVRTNDLIRDFLRIELVKSTISYTRRRYDRTSVGLIPNNRLDRNNTNSFYSKAKIQSLSQHQEVIGTLLNRNKEYPSLMILLASNCSRIGLFKNSKYPNAVKESNPRIPIRDIFGLLGVIVPSISNFSSSYYLLTHNQILLKKYLFLDNLKQTFQVLQGLKYSLIDENKRISNFDSNIMLEPFHLNWHFLHHDSWEETLAIIHLGQFICENLCLFKSHIKKSGQIFIVNMDSFVLRAAKPYLATIGATVHGHYGKILYKGDRLVTFIYEKSRSSDITQGLPKVEQIFEARSIDSLSPNLERRIEDWNERIPRILGVPWGFLIGAELTIAQSRISLVNKIQKVYRSQGVQIHNRHIEIIIRQVTSKVRVSEDGMSNVFLPGELIGLLRAERAGRALDESIYYRAILLGITRASLNTQSFISEASFQETARVLAKAALRGRIDWLKGLKENVVLGGIIPVGTGFQKFVHRSPQDKNLYFEIQKKNLFASEMRDILFLHTELVSSDSDVTNNFYETSETPFTPIYTI.

4 residues coordinate Zn(2+): Cys-220, Cys-296, Cys-303, and Cys-306. Composition is skewed to basic and acidic residues over residues 644–668 (RTQE…RTRE) and 678–688 (PENKYRTREGE). Disordered regions lie at residues 644–698 (RTQE…EDEY) and 719–800 (YRTL…KKEG). Acidic residues-rich tracts occupy residues 744–762 (GEYE…SSED) and 770–789 (TLEE…EYGS).

Belongs to the RNA polymerase beta' chain family. RpoC2 subfamily. As to quaternary structure, in plastids the minimal PEP RNA polymerase catalytic core is composed of four subunits: alpha, beta, beta', and beta''. When a (nuclear-encoded) sigma factor is associated with the core the holoenzyme is formed, which can initiate transcription. It depends on Zn(2+) as a cofactor.

It localises to the plastid. The protein resides in the chloroplast. The enzyme catalyses RNA(n) + a ribonucleoside 5'-triphosphate = RNA(n+1) + diphosphate. DNA-dependent RNA polymerase catalyzes the transcription of DNA into RNA using the four ribonucleoside triphosphates as substrates. This chain is DNA-directed RNA polymerase subunit beta'', found in Saccharum hybrid (Sugarcane).